Consider the following 516-residue polypeptide: MTTPSHAPAVDLATAKDAVVQHLSRLFEFTTGPQGGPARLGFAGAVLITAGGLGAGSVRQHDPLLESIHMSWLRFGHGLVLSSILLWTGVGVMLLAWLGLGRRVLAGEATEFTMRATTVIWLAPLLLSVPVFSRDTYSYLAQGALLRDGLDPYAVGPVGNPNALLDDVSPIWTITTAPYGPAFILVAKFVTVIVGNNVVAGTMLLRLCMLPGLALLVWATPRLASHLGTHGPTALWICVLNPLVLIHLMGGVHNEMLMVGLMTAGIALTVQGRNVAGIILITVAIAVKATAGIALPFLVWVWLRHLRERRGYRPVQAFLAAAAISLLIFVAVFAVLSAVAGVGLGWLTALAGSVKIINWLTVPTGAANVIHALGRGLFTVDFYTLLRITRLIGIVIIAVSLPLLWWRFRRDDRAALTGVAWSMLIVVLFVPAALPWYYSWPLAVAAPLAQARRAIAAIAGLSTWVMVIFKPDGSHGMYSWLHFWIATACALTAWYVLYRSPDRRGVQAATPVVNTP.

Thr2 bears the N-acetylthreonine mark. A run of 13 helical transmembrane segments spans residues 38–58, 78–98, 112–132, 174–194, 198–218, 232–252, 278–298, 326–346, 350–370, 385–405, 414–434, 454–474, and 477–497; these read ARLG…AGSV, GLVL…LAWL, FTMR…VPVF, ITTA…TVIV, VVAG…LLVW, PTAL…MGGV, IILI…LPFL, LLIF…GLGW, LAGS…ANVI, LLRI…PLLW, AALT…PAAL, AIAA…PDGS, and MYSW…WYVL.

This sequence belongs to the MptA/B family.

The protein localises to the membrane. In terms of biological role, involved in the latter stages of the biosynthesis of the alpha-(1-&gt;6) mannan core of lipomannan (LM). Catalyzes the addition of alpha-(1-&gt;6)-mannose residue. This is Alpha-(1-&gt;6)-mannopyranosyltransferase A (mptA) from Mycobacterium tuberculosis (strain ATCC 25618 / H37Rv).